The chain runs to 908 residues: Protein translocase subunit SecA (908 aa).

ATP-binding positions include Q87, 105 to 109, and D512; that span reads GEGKT. The tract at residues 882–908 is disordered; that stretch reads DGEKVGRNDPCPCGSGKKYKQCHGKLT. Zn(2+) contacts are provided by C892, C894, C903, and H904. Positions 898–908 are enriched in basic residues; it reads KKYKQCHGKLT.

The protein belongs to the SecA family. As to quaternary structure, monomer and homodimer. Part of the essential Sec protein translocation apparatus which comprises SecA, SecYEG and auxiliary proteins SecDF-YajC and YidC. The cofactor is Zn(2+).

Its subcellular location is the cell inner membrane. It is found in the cytoplasm. The catalysed reaction is ATP + H2O + cellular proteinSide 1 = ADP + phosphate + cellular proteinSide 2.. Its function is as follows. Part of the Sec protein translocase complex. Interacts with the SecYEG preprotein conducting channel. Has a central role in coupling the hydrolysis of ATP to the transfer of proteins into and across the cell membrane, serving both as a receptor for the preprotein-SecB complex and as an ATP-driven molecular motor driving the stepwise translocation of polypeptide chains across the membrane. The polypeptide is Protein translocase subunit SecA (Shewanella amazonensis (strain ATCC BAA-1098 / SB2B)).